A 377-amino-acid polypeptide reads, in one-letter code: Pseudouridylate synthase RPUSD4, mitochondrial (377 aa).

The transit peptide at 1-35 (MAAPLLGSPGLQVLSMSSRTGKLFTPSSRSFCSRA) directs the protein to the mitochondrion. The active site involves Asp-153.

This sequence belongs to the pseudouridine synthase RluA family. As to quaternary structure, interacts with 16S mt-rRNA, mt-tRNA(Phe) and mt-tRNA(Met). Forms a regulatory protein-RNA complex, consisting of RCC1L, NGRN, RPUSD3, RPUSD4, TRUB2, FASTKD2 and 16S mt-rRNA.

It localises to the mitochondrion matrix. The protein localises to the nucleus. Its subcellular location is the cytoplasm. It carries out the reaction uridine in 5S rRNA = pseudouridine in 5S rRNA. The catalysed reaction is a uridine in tRNA = a pseudouridine in tRNA. The enzyme catalyses a uridine in mRNA = a pseudouridine in mRNA. In terms of biological role, catalyzes uridine to pseudouridine isomerization (pseudouridylation) of different mitochondrial RNA substrates. Acts on position 1397 in 16S mitochondrial ribosomal RNA (16S mt-rRNA). This modification is required for the assembly of 16S mt-rRNA into a functional mitochondrial ribosome. As a component of a functional protein-RNA module, consisting of RCC1L, NGRN, RPUSD3, RPUSD4, TRUB2, FASTKD2 and 16S mt-rRNA, controls 16S mt-rRNA abundance and is required for intra-mitochondrial translation. Acts on position 39 in mitochondrial tRNA(Phe). Also catalyzes pseudouridylation of mRNAs in nucleus: acts as a regulator of pre-mRNA splicing by mediating pseudouridylation of pre-mRNAs at locations associated with alternatively spliced regions. Pseudouridylation of pre-mRNAs near splice sites directly regulates mRNA splicing and mRNA 3'-end processing. This chain is Pseudouridylate synthase RPUSD4, mitochondrial, found in Rattus norvegicus (Rat).